The sequence spans 333 residues: Ribosomal protein L11 methyltransferase (333 aa).

Residues Thr-181, Gly-202, Asp-224, and Asn-268 each coordinate S-adenosyl-L-methionine.

It belongs to the methyltransferase superfamily. PrmA family.

It localises to the cytoplasm. It carries out the reaction L-lysyl-[protein] + 3 S-adenosyl-L-methionine = N(6),N(6),N(6)-trimethyl-L-lysyl-[protein] + 3 S-adenosyl-L-homocysteine + 3 H(+). Methylates ribosomal protein L11. This Helicobacter pylori (strain ATCC 700392 / 26695) (Campylobacter pylori) protein is Ribosomal protein L11 methyltransferase.